The primary structure comprises 406 residues: Tyrosine--tRNA ligase (406 aa).

L-tyrosine is bound at residue tyrosine 35. Positions 40–49 match the 'HIGH' region motif; the sequence is ATSTSLHIGH. L-tyrosine-binding residues include tyrosine 166 and glutamine 170. The short motif at 226–230 is the 'KMSKS' region element; the sequence is KMGKS. Lysine 229 contributes to the ATP binding site. The S4 RNA-binding domain maps to 341–405; it reads ILLIDLMVLS…IGKKRILRVI (65 aa).

The protein belongs to the class-I aminoacyl-tRNA synthetase family. TyrS type 1 subfamily. Homodimer.

The protein localises to the cytoplasm. It catalyses the reaction tRNA(Tyr) + L-tyrosine + ATP = L-tyrosyl-tRNA(Tyr) + AMP + diphosphate + H(+). Functionally, catalyzes the attachment of tyrosine to tRNA(Tyr) in a two-step reaction: tyrosine is first activated by ATP to form Tyr-AMP and then transferred to the acceptor end of tRNA(Tyr). This is Tyrosine--tRNA ligase from Borrelia turicatae (strain 91E135).